The following is a 1380-amino-acid chain: MESEPDQSFKDLSWFLQAIKDPQQTFFNLQTLSFSSSGNTTHCQLITESSMNINVTRDNLTSLSQIFIELATSLETQTSLRNLEFEGIFWEIELLQSLGLLLDNTSKIKQLAFRKNRFSEQCLNELSEILKRNRFLKEVMFLESSIGYRGATLLGSALQVNDSLEELQIWEDSIGSKGAEELSRMIEMNSSLKLFSIFDSSPFTATPLISAVLGMNREMEVHMWSGDHKRDRSLKLVEFLPESKTLRIYQIDISGSCRVAAALGMNTTVRSLDMTGAKLNSRWAKEFRWVLEQNKTLREVKLSKTGLKDKAVVYIAAGLFKNKSLQSLYVDGNRFGSVGVEDLLCPLSRFSALQLQANITLRSIVFGGSNTKIGRDGLTAVLKMVTTNETVVHLGIHDDASLGPDDFIHIFKSLQKNASLRRFSLQGCKGVRGDRVLEAITETLQINPLIEEIDLARTPLQDSGKADEIYQKLGHNGRKIDEAETDDSLKDMPLTEPKSVRAFLCGQNYAGKTTLCNSILQSSSASGFPYVENVRNLMNPVEQVVKTVGGMKIKTFKDEETKISMWNLAGQHEFFALHDLMFPSPCFFLIVLSLFRKPSNKEPKTPAEVEEELEYWLRFIVSNSRKAIQQCMKPNVTIVLTHSEKINLQSESFQATVGCIQRLRDKFQALVEFYPTVFTVDARSSPSVSKLTHHIRMTSKAILQRVPRVYQLCNDIVQLLSDWRSENSNKPIMRWKAFADLCQFKVPSLRIKSRNENIQIVETRRHAIATCLHQMGEVIYFDDLGFLILDYEWFCGEVLTQLIKLDVRKQSTGERNGFVSRKELEKTLRSSLQSPIPGMTSKVLEHFDACDLVKMMKKVELCYEQDPSSPDSSLLVPSILEEGRGKTQKWQINTHDCVYSGRHLQCDDSSHMFLTAGFFPRLQVHLHNRIMELKNQHGATYSLEKYLIAITIHGINIRVELGGQLGNYIDVLACSSKSLTETLRLIHQLIIPAIQSSCRGVILLEHIIRPQCVQDLTPPRFRQSQFVSLHRLKEALSSVPAETMYDYQHTWDSVLDSGKTVLRAGFDLARNLLSDDDFREVLQRRYHDLHNLAQELQVPTDENPEADNHVPVTNELEKVDPSFGGIAKGVEAVLQRLKIIEQEIRDLKQEIQGLRYYEHRLLIQLHHKVNYLVNYNVQMDERKVPNMFYFIRAENYGRRLITSMVPGMVALRIHMLCEFRREMHVVEDQLGCDVMQIDNQAVKCLAPYMTNFMKLVTFALRIGANWAAGMGHMIPDLSHTIAHLANPAVMTGAAGAAGAIGVAAALGRNRGRDRDIQEQEQRAAQQWLIDYLREQTCSTGRDIAEKFGLWRVRYRDDGSIAWICKRHMITRAHEVIQVPL.

LRR repeat units lie at residues 26 to 46 (FFNL…CQLI), 47 to 70 (TESS…FIEL), 105 to 132 (TSKI…ILKR), 161 to 184 (NDSL…ELSR), 266 to 289 (NTTV…EFRW), 299 to 322 (EVKL…LFKN), 323 to 346 (KSLQ…LLCP), 348 to 371 (SRFS…GSNT), 446 to 472 (INPL…IYQK), and 476 to 502 (NGRK…SVRA). Residues 493–702 (PLTEPKSVRA…HHIRMTSKAI (210 aa)) enclose the Roc domain. GTP contacts are provided by residues 506–513 (GQNYAGKT) and 567–571 (NLAGQ). A helical membrane pass occupies residues 574-594 (FFALHDLMFPSPCFFLIVLSL). LRR repeat units follow at residues 640–665 (LTHS…RLRD), 688–712 (VSKL…VYQL), 799–826 (LTQL…ELEK), 1023–1046 (QSQF…TMYD), 1131–1154 (EAVL…IQGL), and 1229–1254 (QLGC…NFMK). 641 to 644 (THSE) contacts GTP. The COR domain occupies 757–931 (NIQIVETRRH…LQVHLHNRIM (175 aa)). 2 helical membrane passes run 1255 to 1275 (LVTF…HMIP) and 1287 to 1307 (PAVM…AALG).

In terms of tissue distribution, expressed in seedlings, roots, leaves, stems and flowers. Present in ovules, prominently in nucellus and integuments.

The protein resides in the membrane. Involved in the basipetal transport of auxin (IAA) that modulates growth and organs organization. Required for initial divisions in the epidermal/lateral root cap leading to the formation of epidermal cells and a clone of lateral root cap cells, as well as for the maintenance of the radial pattern of cell specification in the root, thus regulating the distinction between the lateral root cap and epidermis. The sequence is that of Protein TORNADO 1 (TRN1) from Arabidopsis thaliana (Mouse-ear cress).